Reading from the N-terminus, the 453-residue chain is Jacalin-related lectin 40 (453 aa).

3 consecutive Jacalin-type lectin domains span residues 1–142, 154–296, and 306–449; these read MAQK…YFTT, HIKL…YFSS, and PEKL…YVVP. At A2 the chain carries N-acetylalanine.

Belongs to the jacalin lectin family. Expressed in roots.

This is Jacalin-related lectin 40 (JAL40) from Arabidopsis thaliana (Mouse-ear cress).